The chain runs to 217 residues: Large ribosomal subunit protein bL25 (217 aa).

The span at 195 to 211 (PAEGAAAAPAKGAAKGA) shows a compositional bias: low complexity. Residues 195–217 (PAEGAAAAPAKGAAKGAAKGGKK) form a disordered region.

The protein belongs to the bacterial ribosomal protein bL25 family. CTC subfamily. As to quaternary structure, part of the 50S ribosomal subunit; part of the 5S rRNA/L5/L18/L25 subcomplex. Contacts the 5S rRNA. Binds to the 5S rRNA independently of L5 and L18.

In terms of biological role, this is one of the proteins that binds to the 5S RNA in the ribosome where it forms part of the central protuberance. The chain is Large ribosomal subunit protein bL25 from Acidiphilium cryptum (strain JF-5).